We begin with the raw amino-acid sequence, 63 residues long: Large ribosomal subunit protein uL30 (63 aa).

The protein belongs to the universal ribosomal protein uL30 family. In terms of assembly, part of the 50S ribosomal subunit.

The protein is Large ribosomal subunit protein uL30 of Rhodospirillum rubrum (strain ATCC 11170 / ATH 1.1.1 / DSM 467 / LMG 4362 / NCIMB 8255 / S1).